Here is a 450-residue protein sequence, read N- to C-terminus: MKRRYFGTDGIRGQSNVFPMTPDLAMRVGIAAGTIFRRGNHRHRVVIGKDTRLSGYMLENAMVAGFTAAGLDAFILGPIPTPAVAMLTRSLRCDIGVMISASHNPYEDNGIKLFGPDGYKLSDDIEAEIEDLLEKDLSTQLAKSDDIGRAKRVDGVHDRYIEHAKRTLPRDVTLQGLRIAIDCANGAAYKVAPAVLWELGADVVTIGNEPNGTNINLNCGSTSPVALQKKVDEVRADIGIALDGDADRVIIVDENGSIVDGDQLMAVIAESWAESQQLRGNGIVATVMSNLGLERFLDERGMALARTKVGDRYVVEHMRQHNYNVGGEQSGHIVLSDYGTTGDGLVAALQILAAVKRTGRTVSEVCRRFEPVPQLLRNVRISGGKPLEDIQVQKAIADAEAELAKTGRLVIRPSGTEPLIRVMAEGDDRAQIERIVNELIGTISNVRSAA.

Catalysis depends on S102, which acts as the Phosphoserine intermediate. Mg(2+) contacts are provided by S102, D243, D245, and D247. Position 102 is a phosphoserine (S102).

The protein belongs to the phosphohexose mutase family. It depends on Mg(2+) as a cofactor. In terms of processing, activated by phosphorylation.

The enzyme catalyses alpha-D-glucosamine 1-phosphate = D-glucosamine 6-phosphate. Catalyzes the conversion of glucosamine-6-phosphate to glucosamine-1-phosphate. The protein is Phosphoglucosamine mutase of Rhizobium etli (strain CIAT 652).